The following is a 501-amino-acid chain: Glutathione gamma-glutamylcysteinyltransferase 1 (501 aa).

In terms of domain architecture, Peptidase C83 spans M1–R221. Residues C56, H162, and D180 contribute to the active site.

Belongs to the phytochelatin synthase family. In terms of tissue distribution, expressed in roots, nodules and leaves.

It carries out the reaction [Glu(-Cys)](n)-Gly + glutathione + H(+) = [Glu(-Cys)](n+1)-Gly + glycine. With respect to regulation, requires cadmium for activity. Also activated in vitro by Zn(2+), Cu(2+), Fe(2+) or Fe(3+) ions, but not by Co(2+) or Ni(2+) ions. Functionally, involved in the synthesis of phytochelatins (PC) and homophytochelatins (hPC), the heavy-metal-binding peptides of plants. The protein is Glutathione gamma-glutamylcysteinyltransferase 1 (PCS1) of Lotus japonicus (Lotus corniculatus var. japonicus).